The sequence spans 418 residues: Putative methylthiotransferase HP_0285 (418 aa).

An MTTase N-terminal domain is found at 2–110 (KKVYFKTFGC…INALLQEKKR (109 aa)). 6 residues coordinate [4Fe-4S] cluster: Cys-11, Cys-45, Cys-74, Cys-144, Cys-148, and Cys-151. The Radical SAM core domain maps to 130-355 (FVGKTRAFIK…KDLIFHKNKA (226 aa)).

It belongs to the methylthiotransferase family. The cofactor is [4Fe-4S] cluster.

In Helicobacter pylori (strain ATCC 700392 / 26695) (Campylobacter pylori), this protein is Putative methylthiotransferase HP_0285.